We begin with the raw amino-acid sequence, 206 residues long: MDKNSNGKLIALAVGGAVLMGALFFSVSFLTGYIPAPNHSAILTPLRSFMGWFLLIFCASIIIMGLGKMSSAISDKWFLSFPLSIFVIVMVMFLSLRVYWEKGRTTTVDGKYIRTTAELKEFLNKPAATSDVPPAPAGFDFDAAKKLVDVRCNKCHTLDSVADLFRTKYKKTGQVNLIVKRMQGFPGSGISDDDAKTIGIWLHEKF.

Transmembrane regions (helical) follow at residues 10–30, 49–69, and 76–96; these read IALA…VSFL, FMGW…LGKM, and KWFL…FLSL. 4 residues coordinate heme: Cys152, Cys155, His156, and Met182.

In terms of assembly, monomer. Component of the photosynthetic reaction center composed of protein subunits PscA, PscC, PscB and PscD. The reaction center interacts with FmoA (which forms the Fenna-Matthews-Olson (FMO) complex). The reaction center/FmoA complex has two PscA subunits, one PscB and one PscD subunit, probably two FmoA complexes and at least one PscC subunit. Post-translationally, binds 1 heme group per subunit.

It is found in the cell inner membrane. In terms of biological role, monoheme cytochrome which is the immediate electron donor to P840 of the photosynthetic reaction center complex. In Chlorobaculum tepidum (strain ATCC 49652 / DSM 12025 / NBRC 103806 / TLS) (Chlorobium tepidum), this protein is Cytochrome c (pscC).